Consider the following 535-residue polypeptide: Putative beta-glucosidase 41 (535 aa).

Residues 1-27 (MESLMRLVLVLFPFFVVFFVPLDHVSS) form the signal peptide. Glutamine 49 contributes to the a beta-D-glucoside binding site. Asparagine 118 carries N-linked (GlcNAc...) asparagine glycosylation. A beta-D-glucoside contacts are provided by residues histidine 151 and 196–197 (NE). Glutamate 197 functions as the Proton donor in the catalytic mechanism. The cysteines at positions 216 and 224 are disulfide-linked. A beta-D-glucoside is bound by residues tyrosine 340 and glutamate 413. Glutamate 413 (nucleophile) is an active-site residue. N-linked (GlcNAc...) asparagine glycosylation is present at asparagine 445. Residues tryptophan 463, 470–471 (EW), and phenylalanine 479 each bind a beta-D-glucoside. N-linked (GlcNAc...) asparagine glycosylation is present at asparagine 489.

It belongs to the glycosyl hydrolase 1 family.

It catalyses the reaction Hydrolysis of terminal, non-reducing beta-D-glucosyl residues with release of beta-D-glucose.. The chain is Putative beta-glucosidase 41 from Arabidopsis thaliana (Mouse-ear cress).